Consider the following 147-residue polypeptide: Leghemoglobin (147 aa).

The 146-residue stretch at 2–147 (GFTADQEALV…LASAIKKAMS (146 aa)) folds into the Globin domain. A nitrated tyrosine mark is found at Tyr-25 and Tyr-30. Ser-45 contributes to the heme b binding site. The residue at position 45 (Ser-45) is a Phosphoserine. An O2-binding site is contributed by His-62. Residues Lys-65, His-94, and Lys-97 each contribute to the heme b site. Tyr-135 carries the nitrated tyrosine modification.

The protein belongs to the plant globin family. In terms of assembly, monomer. Post-translationally, nitrated in effective nodules and particularly in hypoxic conditions; this mechanism may play a protective role in the symbiosis by buffering toxic peroxynitrite NO(2)(-). Nitration level decrease during nodule senescence. Phosphorylation at Ser-45 disrupts the molecular environment of its porphyrin ring oxygen binding pocket, thus leading to a reduced oxygen consumption and to the delivery of oxygen O(2) to symbiosomes. Root nodules.

It localises to the cytoplasm. The protein localises to the cytosol. It is found in the nucleus. In terms of biological role, leghemoglobin that reversibly binds oxygen O(2) through a pentacoordinated heme iron. In root nodules, facilitates the diffusion of oxygen to the bacteroids while preventing the bacterial nitrogenase from being inactivated by buffering dioxygen, nitric oxide and carbon monoxide, and promoting the formation of reactive oxygen species (ROS, e.g. H(2)O(2)). This role is essential for symbiotic nitrogen fixation (SNF). This Medicago sativa (Alfalfa) protein is Leghemoglobin (LB3).